Here is a 349-residue protein sequence, read N- to C-terminus: tRNA pseudouridine synthase D (349 aa).

Asp77 (nucleophile) is an active-site residue. A TRUD domain is found at 151-309; that stretch reads GVPNYFGEQR…ETIDESTLKL (159 aa).

Belongs to the pseudouridine synthase TruD family.

The catalysed reaction is uridine(13) in tRNA = pseudouridine(13) in tRNA. Functionally, responsible for synthesis of pseudouridine from uracil-13 in transfer RNAs. In Pseudoalteromonas translucida (strain TAC 125), this protein is tRNA pseudouridine synthase D.